The following is a 224-amino-acid chain: EEF1A lysine methyltransferase 3 (224 aa).

S-adenosyl-L-methionine-binding positions include Trp-58, 84-86, Asp-105, Trp-134, and Ala-151; that span reads GAG.

The protein belongs to the methyltransferase superfamily. METTL21 family.

It is found in the cytoplasm. Its subcellular location is the cytoskeleton. It localises to the microtubule organizing center. The protein resides in the centrosome. It carries out the reaction L-lysyl-[protein] + 3 S-adenosyl-L-methionine = N(6),N(6),N(6)-trimethyl-L-lysyl-[protein] + 3 S-adenosyl-L-homocysteine + 3 H(+). It catalyses the reaction L-lysyl-[protein] + S-adenosyl-L-methionine = N(6)-methyl-L-lysyl-[protein] + S-adenosyl-L-homocysteine + H(+). The enzyme catalyses N(6)-methyl-L-lysyl-[protein] + S-adenosyl-L-methionine = N(6),N(6)-dimethyl-L-lysyl-[protein] + S-adenosyl-L-homocysteine + H(+). The catalysed reaction is N(6),N(6)-dimethyl-L-lysyl-[protein] + S-adenosyl-L-methionine = N(6),N(6),N(6)-trimethyl-L-lysyl-[protein] + S-adenosyl-L-homocysteine + H(+). Its function is as follows. Protein-lysine methyltransferase that selectively mono-, di- and trimethylates 'Lys-165' of the translation elongation factors EEF1A1 and EEF1A2 in an aminoacyl-tRNA and GTP-dependent manner. EEF1A1 methylation by EEF1AKMT3 is dynamic as well as inducible by stress conditions, such as ER-stress, and plays a regulatory role on mRNA translation. The sequence is that of EEF1A lysine methyltransferase 3 from Xenopus tropicalis (Western clawed frog).